Reading from the N-terminus, the 507-residue chain is MITLTPGHLTLPQLRRIAREPVQLKLDPASFAKIDAGAKAVADIAAKGEPAYGINTGFGRLASTHIPHDQLELLQKNLVLSHAVGVGEPMARSSVRLLLALKLSSLGRGHSGIRREVMDALITLFNADVLPLIPVKGSVGASGDLAPLAHMSAVLLGVGEVFIRGERASALDGLRVAGLAPLTLQAKEGLALLNGTQASTALALDNMFAIEDLYRTALVAGALSVDAAAGSVKPFDARIHELRGHQGQIDAAASYRELLEGSPINQSHRDCDKVQDPYSLRCQPQVMGACLDQMRHAADVLLVEANAVSDNPLIFPDTGEVLSGGNFHAEPVAFAADNLALAAAEIGALAERRIALLIDATLSGLPPFLVKDGGVNSGFMIAHVTAAALASENKTLAHPASVDSLPTSANQEDHVSMATFAARKLADIADNTKHILAIELLAAAQGVDLRAPYHTSPKLAPVMETIRGKVAHYELDHYFAPDIAVIAKLVGERAFAKVAPFSFASEQ.

The segment at residues 141-143 (ASG) is a cross-link (5-imidazolinone (Ala-Gly)). A 2,3-didehydroalanine (Ser) modification is found at S142.

It belongs to the PAL/histidase family. Contains an active site 4-methylidene-imidazol-5-one (MIO), which is formed autocatalytically by cyclization and dehydration of residues Ala-Ser-Gly.

It is found in the cytoplasm. It catalyses the reaction L-histidine = trans-urocanate + NH4(+). It participates in amino-acid degradation; L-histidine degradation into L-glutamate; N-formimidoyl-L-glutamate from L-histidine: step 1/3. In Burkholderia cenocepacia (strain HI2424), this protein is Histidine ammonia-lyase.